Consider the following 417-residue polypeptide: Serine hydroxymethyltransferase (417 aa).

(6S)-5,6,7,8-tetrahydrofolate-binding positions include Leu121 and 125–127 (GHL). Lys229 carries the post-translational modification N6-(pyridoxal phosphate)lysine. 355–357 (SPF) is a (6S)-5,6,7,8-tetrahydrofolate binding site.

The protein belongs to the SHMT family. Homodimer. The cofactor is pyridoxal 5'-phosphate.

Its subcellular location is the cytoplasm. The catalysed reaction is (6R)-5,10-methylene-5,6,7,8-tetrahydrofolate + glycine + H2O = (6S)-5,6,7,8-tetrahydrofolate + L-serine. It functions in the pathway one-carbon metabolism; tetrahydrofolate interconversion. It participates in amino-acid biosynthesis; glycine biosynthesis; glycine from L-serine: step 1/1. In terms of biological role, catalyzes the reversible interconversion of serine and glycine with tetrahydrofolate (THF) serving as the one-carbon carrier. This reaction serves as the major source of one-carbon groups required for the biosynthesis of purines, thymidylate, methionine, and other important biomolecules. Also exhibits THF-independent aldolase activity toward beta-hydroxyamino acids, producing glycine and aldehydes, via a retro-aldol mechanism. This chain is Serine hydroxymethyltransferase, found in Klebsiella pneumoniae subsp. pneumoniae (strain ATCC 700721 / MGH 78578).